Consider the following 320-residue polypeptide: Malate dehydrogenase (320 aa).

NAD(+)-binding positions include 10–15 (GAGNIG) and Asp34. Residues Arg83 and Arg89 each contribute to the substrate site. NAD(+) contacts are provided by residues Asn96 and 119 to 121 (ITN). The substrate site is built by Asn121 and Arg152. His176 functions as the Proton acceptor in the catalytic mechanism.

This sequence belongs to the LDH/MDH superfamily. MDH type 3 family.

It catalyses the reaction (S)-malate + NAD(+) = oxaloacetate + NADH + H(+). Catalyzes the reversible oxidation of malate to oxaloacetate. The protein is Malate dehydrogenase of Sphingopyxis alaskensis (strain DSM 13593 / LMG 18877 / RB2256) (Sphingomonas alaskensis).